The sequence spans 561 residues: Tetracenomycin A2 monooxygenase-dioxygenase (561 aa).

4 residues coordinate FAD: leucine 15, glutamate 35, glutamine 128, and methionine 152. The active-site Proton acceptor is tyrosine 231. Aspartate 322 is a binding site for FAD.

The protein belongs to the PheA/TfdB FAD monooxygenase family. Monomer. May form oligomers up to homohexamers. The cofactor is FAD.

It catalyses the reaction tetracenomycin A2 + 2 NADPH + 2 O2 + 2 H(+) = tetracenomycin C + 2 NADP(+) + H2O. Its pathway is antibiotic biosynthesis; tetracenomycin C biosynthesis. Functionally, involved in the biosynthesis of tetracenomycin C (TCM C). Catalyzes the triple hydroxylation of tetracenomycin A2 (TCM A2) at positions C-4, C-4a and C-12a to give tetracenomycin C (TCM C). Can use either NADH or NADPH as electron donors, but prefers NADPH under physiological conditions. The sequence is that of Tetracenomycin A2 monooxygenase-dioxygenase from Streptomyces glaucescens.